Here is a 782-residue protein sequence, read N- to C-terminus: Spastin (782 aa).

The tract at residues 1 to 103 is disordered; it reads MVRTKNQSSS…GNAPRGGNSS (103 aa). Topologically, residues 1-115 are cytoplasmic; that stretch reads MVRTKNQSSS…KQNLYVVSFP (115 aa). A required for localization to punctate cytoplasmic foci region spans residues 1–212; the sequence is MVRTKNQSSS…RAIQPLEMAG (212 aa). A compositionally biased stretch (low complexity) spans 8-19; the sequence is SSSSSASSSTKS. Polar residues predominate over residues 25 to 34; the sequence is GGTTNRSRSC. 2 stretches are compositionally biased toward low complexity: residues 44 to 75 and 84 to 93; these read SKSSSKPTSNNRQRTTTNNNTTAITTTPGSSP and TTDADLTPTS. The segment at residues 116–136 is an intramembrane region (helical); the sequence is IIFLFNVLRSLIYQLFCIFRY. At 137–782 the chain is on the cytoplasmic side; it reads LYGASTKVIY…WSQDYGDITI (646 aa). Positions 210 to 782 are sufficient for interaction with microtubules and microtubule severing; the sequence is MAGNRAGGNY…WSQDYGDITI (573 aa). The MIT domain maps to 235–310; that stretch reads HRRAFEYISK…SMARDRLHFL (76 aa). Residues 325–479 are disordered; sequence KEQQQKKKSP…GSGSGASTPM (155 aa). A compositionally biased stretch (low complexity) spans 334 to 343; that stretch reads PQQQPQQQQQ. Composition is skewed to polar residues over residues 408-426 and 447-463; these read NKSQTLPRNLGSKTSSTSV and QFSSGRNTPPQRSRTPI. Residues 465–479 form a required for interaction with microtubules region; the sequence is NNAAGGSGSGASTPM. 547 to 554 provides a ligand contact to ATP; sequence GPPGNGKT.

It belongs to the AAA ATPase family. Spastin subfamily. In terms of assembly, homohexamer. The homohexamer is stabilized by ATP-binding. The homohexamer may adopt a ring conformation through which microtubules pass prior to being severed. Interacts with microtubules. Interacts with atl; may be involved in microtubule dynamics.

It localises to the membrane. It is found in the cytoplasm. The protein localises to the cytoskeleton. The protein resides in the microtubule organizing center. Its subcellular location is the centrosome. It localises to the chromosome. It is found in the lipid droplet. It carries out the reaction n ATP + n H2O + a microtubule = n ADP + n phosphate + (n+1) alpha/beta tubulin heterodimers.. ATP-dependent microtubule severing protein. Stimulates microtubule minus-end depolymerization and poleward microtubule flux in the mitotic spindle. Regulates microtubule stability in the neuromuscular junction synapse. Involved in lipid metabolism by regulating the size and distribution of lipid droplets. Involved in axon regeneration by regulating microtubule severing. This is Spastin from Drosophila grimshawi (Hawaiian fruit fly).